The chain runs to 497 residues: MAARCWVWGFVVALLAVAAAADGEEEEGKWEPLIRMPTEEGDDAEAAAPAPAPAAADYGGTRWAVLVAGSSGYGNYRHQADVCHACQILQKGGVKEENIVVFMYDDIAHNILNPRPGTIINHPKGGDVYAGVPKDYTGHQVTTENFFAVLLGNKTAVTGGSGKVIDSKPEDHIFIYYSDHGGPGVLGMPNLPYLYAGDFIKVLQKKHASNSYSKMVIYVEACESGSIFEGLMPENLNIYVTTASNAVENSWGTYCPGEEPSPPPEYITCLGDMYSVAWMEDSETHNLKKETIEDQYELVKKRTSNANKLNEGSHVMEYGDKTFKDEKLFLYQGFNPANGNITNELIWPVPKATVNQRDADLLFMWKRYEQLNGVSEDKLRALREIEDTIAHRKHLDSSIDFIGKLVFGFENGPLALEAARSSGQPLVDNWDCLKKMVRIFESQCGSLTQYGMKYMRAFANICNNGVSEAKMMEASINACGRYNSARWSPMTEGGHSA.

An N-terminal signal peptide occupies residues 1 to 23 (MAARCWVWGFVVALLAVAAAADG). A glycan (N-linked (GlcNAc...) asparagine) is linked at Asn153. His180 is an active-site residue. Residue Cys222 is the Nucleophile of the active site. Cysteines 255 and 269 form a disulfide. A glycan (N-linked (GlcNAc...) asparagine) is linked at Asn340. 2 disulfide bridges follow: Cys432–Cys462 and Cys444–Cys479.

It belongs to the peptidase C13 family. Post-translationally, auto-catalytic activation.

The protein resides in the protein storage vacuole. It catalyses the reaction Hydrolysis of proteins and small molecule substrates at -Asn-|-Xaa- bonds.. Its function is as follows. Asparagine-specific endopeptidase that may be involved in processing of proteins targeted to vacuoles. Cysteine protease required for post-translational proteolysis of seed storage proteins in the protein storage vacuole (PSV) of developing seeds, by processing of proglutelin precursor to mature glutelin subunits, thus contributing to the formation of protein crystalline structures in PSV. This Oryza sativa subsp. indica (Rice) protein is Vacuolar-processing enzyme beta-isozyme 1.